A 177-amino-acid chain; its full sequence is Large ribosomal subunit protein uL5 (177 aa).

The protein belongs to the universal ribosomal protein uL5 family. As to quaternary structure, part of the 50S ribosomal subunit. Interacts with protein L18 and the 5S rRNA, and probably with tRNAs. Forms a bridge to the 30S subunit in the 70S ribosome.

In terms of biological role, this is 1 of 5 proteins that mediates the attachment of the 5S rRNA onto the large ribosomal subunit, stabilizing the orientation of adjacent RNA domains. Forms part of the central protuberance. Modeling places the A and P site tRNAs in close proximity to this protein; the 5S rRNA and some of its associated proteins might help stabilize positioning of ribosome-bound tRNAs. In the 70S ribosome it is thought to contact protein S13 of the 30S subunit (bridge B1b), connecting the 2 subunits; this bridge is implicated in subunit movement. This chain is Large ribosomal subunit protein uL5 (rpl5), found in Haloarcula marismortui (strain ATCC 43049 / DSM 3752 / JCM 8966 / VKM B-1809) (Halobacterium marismortui).